Consider the following 321-residue polypeptide: ATP-dependent 6-phosphofructokinase (321 aa).

Glycine 10 contributes to the ATP binding site. 20–24 contributes to the ADP binding site; the sequence is RAVVR. ATP-binding positions include 71 to 72 and 101 to 104; these read RD and GEGT. Glutamate 102 provides a ligand contact to Mg(2+). 125–127 contacts substrate; the sequence is TID. Aspartate 127 serves as the catalytic Proton acceptor. Arginine 154 provides a ligand contact to ADP. Residues arginine 162 and 169-171 each bind substrate; that span reads MGR. Residues 185–187 and 213–215 each bind ADP; these read GAE and KLH. Residues glutamate 222, arginine 246, and 252–255 contribute to the substrate site; that span reads HIQR.

It belongs to the phosphofructokinase type A (PFKA) family. ATP-dependent PFK group I subfamily. Prokaryotic clade 'B1' sub-subfamily. In terms of assembly, homotetramer. Requires Mg(2+) as cofactor.

The protein resides in the cytoplasm. The enzyme catalyses beta-D-fructose 6-phosphate + ATP = beta-D-fructose 1,6-bisphosphate + ADP + H(+). The protein operates within carbohydrate degradation; glycolysis; D-glyceraldehyde 3-phosphate and glycerone phosphate from D-glucose: step 3/4. With respect to regulation, allosterically activated by ADP and other diphosphonucleosides, and allosterically inhibited by phosphoenolpyruvate. Its function is as follows. Catalyzes the phosphorylation of D-fructose 6-phosphate to fructose 1,6-bisphosphate by ATP, the first committing step of glycolysis. In Aquifex aeolicus (strain VF5), this protein is ATP-dependent 6-phosphofructokinase.